The following is a 700-amino-acid chain: Auxin response factor 18 (700 aa).

The segment at residues 128-230 is a DNA-binding region (TF-B3); it reads FAKTLTQSDA…DLCVGIRRAK (103 aa). Disordered stretches follow at residues 234–254 and 560–595; these read VGGP…AAGG and VKKS…DNLS. The span at 239 to 250 shows a compositional bias: pro residues; it reads FLPPPPPPPPTP. Over residues 565–594 the composition is skewed to polar residues; sequence SDGNAENTVNKSNSDVSSPRSNQNGTTDNL. Residues 614 to 697 form the PB1 domain; it reads TGHCKVFMQS…NILTDTSGDN (84 aa).

This sequence belongs to the ARF family. Homodimers and heterodimers. In terms of tissue distribution, expressed in roots, culms, leaves and young panicles.

The protein resides in the nucleus. Its function is as follows. Auxin response factors (ARFs) are transcriptional factors that bind specifically to the DNA sequence 5'-TGTCTC-3' found in the auxin-responsive promoter elements (AuxREs). The chain is Auxin response factor 18 (ARF18) from Oryza sativa subsp. japonica (Rice).